The sequence spans 177 residues: Dihydrofolate reductase (177 aa).

It carries out the reaction (6S)-5,6,7,8-tetrahydrofolate + NADP(+) = 7,8-dihydrofolate + NADPH + H(+). Provides the tetrahydrofolates necessary for the synthesis of nucleotides and amino acids. Bacteriophage T5 induces high levels of dihydrofolate reductase in the host cell, probably for the viral replication. The chain is Dihydrofolate reductase from Escherichia phage T5 (Enterobacteria phage T5).